The sequence spans 251 residues: Chlorocatechol 1,2-dioxygenase (251 aa).

Fe cation-binding residues include Y130, Y164, H188, and H190.

It belongs to the intradiol ring-cleavage dioxygenase family. Requires Fe(3+) as cofactor.

The enzyme catalyses 3-chlorocatechol + O2 = (2E,4Z)-2-chloromuconate + 2 H(+). It catalyses the reaction 3,4-dichlorocatechol + O2 = (2Z,4Z)-2,3-dichloromuconate + 2 H(+). The catalysed reaction is 3,5-dichlorocatechol + O2 = (2E,4E)-2,4-dichloromuconate + 2 H(+). It carries out the reaction 3,6-dichlorocatechol + O2 = (2E,4E)-2,5-dichloromuconate + H(+). The enzyme catalyses 3,4,6-trichlorocatechol + O2 = (2Z,4E)-2,3,5-trichloromuconate + H(+). The protein operates within xenobiotic degradation. Functionally, chlorocatechol 1,2-dioxygenase involved in the degradation of chlorinated benzenes, that occurs via chlorocatechol intermediates. Displays broad substrate specificity. Preferentially cleaves 3-chlorocatechol and 3,4-dichlorocatechol, and shows lower activity on 3,5-dichlorocatechol, 3,6-dichlorocatechol and 3,4,6-trichlorocatechol in vitro. Is not able to convert 3,4,5-trichlorocatechol and 3,4,5,6-tetrachlorocatechol. Thus, probably functions in the degradation pathways of 1,2-dichlorobenzene, 1,4-dichlorobenzene and 1,2,4-trichlorobenzene (via 3,4-dichlorocatechol, 3,6-dichlorocatechol and 3,4,6-trichlorocatechol intermediates, respectively), which allow Pseudomonas sp. strain P51 to grow on these substrates as the sole carbon and energy source. This is Chlorocatechol 1,2-dioxygenase from Pseudomonas sp. (strain P51).